A 112-amino-acid polypeptide reads, in one-letter code: Small ribosomal subunit protein bS6 (112 aa).

This sequence belongs to the bacterial ribosomal protein bS6 family.

Its function is as follows. Binds together with bS18 to 16S ribosomal RNA. The sequence is that of Small ribosomal subunit protein bS6 from Legionella pneumophila (strain Paris).